Consider the following 156-residue polypeptide: Ribosomal RNA large subunit methyltransferase H (156 aa).

Residues Leu73, Gly104, and 123 to 128 each bind S-adenosyl-L-methionine; that span reads ISSMTL.

It belongs to the RNA methyltransferase RlmH family. In terms of assembly, homodimer.

It localises to the cytoplasm. The enzyme catalyses pseudouridine(1915) in 23S rRNA + S-adenosyl-L-methionine = N(3)-methylpseudouridine(1915) in 23S rRNA + S-adenosyl-L-homocysteine + H(+). Functionally, specifically methylates the pseudouridine at position 1915 (m3Psi1915) in 23S rRNA. The protein is Ribosomal RNA large subunit methyltransferase H of Burkholderia cenocepacia (strain ATCC BAA-245 / DSM 16553 / LMG 16656 / NCTC 13227 / J2315 / CF5610) (Burkholderia cepacia (strain J2315)).